A 458-amino-acid polypeptide reads, in one-letter code: Flavohemoprotein (458 aa).

A Globin domain is found at 2-158 (TLSEDTLRAV…LADLFIKREE (157 aa)). Histidine 107 provides a ligand contact to heme b. Catalysis depends on charge relay system residues tyrosine 117 and glutamate 157. Residues 169 to 457 (GGWRQTRTFR…FEMFGPFKAS (289 aa)) are reductase. Residues 172 to 279 (RQTRTFRVEE…APPYGDFFLR (108 aa)) enclose the FAD-binding FR-type domain. Residues tyrosine 211 and 228 to 231 (RQYS) each bind FAD. Residue 321-326 (GIGQTP) participates in NADP(+) binding. 450 to 453 (MFGP) serves as a coordination point for FAD.

Belongs to the globin family. Two-domain flavohemoproteins subfamily. It in the C-terminal section; belongs to the flavoprotein pyridine nucleotide cytochrome reductase family. In terms of assembly, monomer. The cofactor is heme b. FAD serves as cofactor.

The catalysed reaction is 2 nitric oxide + NADPH + 2 O2 = 2 nitrate + NADP(+) + H(+). It catalyses the reaction 2 nitric oxide + NADH + 2 O2 = 2 nitrate + NAD(+) + H(+). In terms of biological role, flavohemoprotein involved in nitric oxide (NO) detoxification in an aerobic process, termed nitric oxide dioxygenase (NOD) reaction that utilizes O(2) and NAD(P)H to convert NO to nitrate, which protects the protozoan parasite from various noxious nitrogen compounds. Therefore, plays a central role in the inducible response to nitrosative stress. May also be involved in O(2) detoxification. This chain is Flavohemoprotein (hmpA), found in Giardia intestinalis (strain ATCC 50803 / WB clone C6) (Giardia lamblia).